The chain runs to 127 residues: Protein KRTCAP2 homolog (127 aa).

4 helical membrane-spanning segments follow: residues 13 to 33 (LISLILWVIIFALLNIGSNFF), 41 to 61 (ILGGFVGSFLFFLQMTFIGAI), 65 to 85 (VKLLETVLAVIITAMISSSVH), and 87 to 107 (VSGTTSIIFSIGWIFYLNHAS).

Belongs to the KRTCAP2 family. Component of the oligosaccharyltransferase (OST) complex.

The protein resides in the membrane. Its function is as follows. Subunit of the oligosaccharyl transferase (OST) complex that catalyzes the initial transfer of a defined glycan (Glc(3)Man(9)GlcNAc(2) in eukaryotes) from the lipid carrier dolichol-pyrophosphate to an asparagine residue within an Asn-X-Ser/Thr consensus motif in nascent polypeptide chains, the first step in protein N-glycosylation. N-glycosylation occurs cotranslationally and the complex associates with the Sec61 complex at the channel-forming translocon complex that mediates protein translocation across the endoplasmic reticulum (ER). All subunits are required for a maximal enzyme activity. The protein is Protein KRTCAP2 homolog of Dictyostelium discoideum (Social amoeba).